The sequence spans 247 residues: ATP synthase subunit a, chloroplastic (247 aa).

Transmembrane regions (helical) follow at residues 38–58 (QVLI…ILVV), 95–115 (VPFI…GALL), 134–154 (INTT…AGIS), 199–219 (LVVV…VMFL), and 220–240 (GLFT…AYIG).

Belongs to the ATPase A chain family. As to quaternary structure, F-type ATPases have 2 components, CF(1) - the catalytic core - and CF(0) - the membrane proton channel. CF(1) has five subunits: alpha(3), beta(3), gamma(1), delta(1), epsilon(1). CF(0) has four main subunits: a, b, b' and c.

Its subcellular location is the plastid. It is found in the chloroplast thylakoid membrane. Its function is as follows. Key component of the proton channel; it plays a direct role in the translocation of protons across the membrane. This chain is ATP synthase subunit a, chloroplastic, found in Pisum sativum (Garden pea).